The chain runs to 186 residues: Ribosome maturation factor RimP (186 aa).

Belongs to the RimP family.

It is found in the cytoplasm. Required for maturation of 30S ribosomal subunits. This is Ribosome maturation factor RimP from Rhizorhabdus wittichii (strain DSM 6014 / CCUG 31198 / JCM 15750 / NBRC 105917 / EY 4224 / RW1) (Sphingomonas wittichii).